The sequence spans 254 residues: 3-deoxy-manno-octulosonate cytidylyltransferase (254 aa).

This sequence belongs to the KdsB family.

The protein resides in the cytoplasm. It catalyses the reaction 3-deoxy-alpha-D-manno-oct-2-ulosonate + CTP = CMP-3-deoxy-beta-D-manno-octulosonate + diphosphate. It functions in the pathway nucleotide-sugar biosynthesis; CMP-3-deoxy-D-manno-octulosonate biosynthesis; CMP-3-deoxy-D-manno-octulosonate from 3-deoxy-D-manno-octulosonate and CTP: step 1/1. It participates in bacterial outer membrane biogenesis; lipopolysaccharide biosynthesis. Functionally, activates KDO (a required 8-carbon sugar) for incorporation into bacterial lipopolysaccharide in Gram-negative bacteria. The polypeptide is 3-deoxy-manno-octulosonate cytidylyltransferase (Pseudomonas putida (strain GB-1)).